The primary structure comprises 245 residues: MIIPALDLINGTVVRLHQGDYGKQRDYGNDPLPRLQDYAAQGAEVLHLVDLTGAKDPAKRQIPLIKTLVAGVNVPVQVGGGVRSEEDVAALLEAGVARVVVGSTAVKSPEMVKGWFERFGADALVLALDVRIDEQGNKQVAVSGWQENSGVSLEQLVETYLPVGLKHVLCTDISRDGTLAGSNVSLYEEVCARYPQVAFQSSGGIGDINDVAALRGTGVRGVIVGRALLEGKFTVKEAIACWQNA.

Catalysis depends on D7, which acts as the Proton acceptor. The active-site Proton donor is the D129.

It belongs to the HisA/HisF family.

It is found in the cytoplasm. It carries out the reaction 1-(5-phospho-beta-D-ribosyl)-5-[(5-phospho-beta-D-ribosylamino)methylideneamino]imidazole-4-carboxamide = 5-[(5-phospho-1-deoxy-D-ribulos-1-ylimino)methylamino]-1-(5-phospho-beta-D-ribosyl)imidazole-4-carboxamide. It participates in amino-acid biosynthesis; L-histidine biosynthesis; L-histidine from 5-phospho-alpha-D-ribose 1-diphosphate: step 4/9. The sequence is that of 1-(5-phosphoribosyl)-5-[(5-phosphoribosylamino)methylideneamino] imidazole-4-carboxamide isomerase from Escherichia coli (strain ATCC 8739 / DSM 1576 / NBRC 3972 / NCIMB 8545 / WDCM 00012 / Crooks).